A 445-amino-acid polypeptide reads, in one-letter code: Asparagine--tRNA ligase (445 aa).

The protein belongs to the class-II aminoacyl-tRNA synthetase family. Homodimer.

The protein localises to the cytoplasm. The catalysed reaction is tRNA(Asn) + L-asparagine + ATP = L-asparaginyl-tRNA(Asn) + AMP + diphosphate + H(+). The chain is Asparagine--tRNA ligase from Deinococcus deserti (strain DSM 17065 / CIP 109153 / LMG 22923 / VCD115).